A 338-amino-acid chain; its full sequence is MTDLKPFLAKAASREPLTRDEARAAFDILMSGQATPSQIGGFLMALRVRGESVDEIVGAVTTMRSKMLTVEAPADAIDIVGTGGDASGTYNISTLAALIVAGAGVPVAKHGNRALSSKSGAADNLSALGVNIDVGPEIISRCIAEASVGFMFAQLHHSAMRHVGPSRVELGTRTIFNLLGPLSNPAGVRRQLLGVFSPQWLVPLAEVMRDLGSECVWVVHGDGLDEITTTGITKVAALEDGKIRTFELSPADFGVSPCVLADIKGGDGVANAAALREVLGGAKNAYRDVSLANAAASLVISGKVETIRDGMKLAAHSLDSGATALALDKLIAVSNDID.

5-phospho-alpha-D-ribose 1-diphosphate-binding positions include Gly81, 84-85 (GD), Thr89, 91-94 (NIST), 109-117 (KHGNRALSS), and Ala121. Residue Gly81 participates in anthranilate binding. A Mg(2+)-binding site is contributed by Ser93. Anthranilate is bound at residue Asn112. Arg167 provides a ligand contact to anthranilate. Asp225 and Glu226 together coordinate Mg(2+).

This sequence belongs to the anthranilate phosphoribosyltransferase family. In terms of assembly, homodimer. Requires Mg(2+) as cofactor.

The catalysed reaction is N-(5-phospho-beta-D-ribosyl)anthranilate + diphosphate = 5-phospho-alpha-D-ribose 1-diphosphate + anthranilate. It participates in amino-acid biosynthesis; L-tryptophan biosynthesis; L-tryptophan from chorismate: step 2/5. Its function is as follows. Catalyzes the transfer of the phosphoribosyl group of 5-phosphorylribose-1-pyrophosphate (PRPP) to anthranilate to yield N-(5'-phosphoribosyl)-anthranilate (PRA). The polypeptide is Anthranilate phosphoribosyltransferase (Rhizobium etli (strain CIAT 652)).